A 246-amino-acid chain; its full sequence is rRNA methyltransferase 2, mitochondrial (246 aa).

Residues 1-18 (MAGYLKLVCVSFQRQGFH) constitute a mitochondrion transit peptide. Residues 83 to 86 (PGAW), aspartate 112, 129 to 130 (DV), and aspartate 154 each bind S-adenosyl-L-methionine. Lysine 194 (proton acceptor) is an active-site residue.

The protein belongs to the class I-like SAM-binding methyltransferase superfamily. RNA methyltransferase RlmE family. As to expression, widely expressed, with highest expression in muscle, placenta, and heart.

It localises to the mitochondrion. It carries out the reaction uridine(1369) in 16S rRNA + S-adenosyl-L-methionine = 2'-O-methyluridine(1369) in 16S rRNA + S-adenosyl-L-homocysteine + H(+). In terms of biological role, S-adenosyl-L-methionine-dependent 2'-O-ribose methyltransferase that catalyzes the formation of 2'-O-methyluridine at position 1369 (Um1369) in the 16S mitochondrial large subunit ribosomal RNA (mtLSU rRNA), a universally conserved modification in the peptidyl transferase domain of the mtLSU rRNA. This activity may require prior 2'-O-methylguanosine modification at position 1370 (Gm1370) by MRM3. Essential for late-stage assembly of mtLSU required for efficient translation of mitochondrial DNA encoded proteins; methyltransferase activity is not required for this function. Essential for mitochondrial respiratory function. This chain is rRNA methyltransferase 2, mitochondrial, found in Homo sapiens (Human).